Here is a 155-residue protein sequence, read N- to C-terminus: SsrA-binding protein (155 aa).

Basic and acidic residues predominate over residues 127-149 (KKDYDKRNDMRKKEAKREMERTF). Residues 127 to 155 (KKDYDKRNDMRKKEAKREMERTFKSKNQY) form a disordered region.

This sequence belongs to the SmpB family.

It is found in the cytoplasm. Its function is as follows. Required for rescue of stalled ribosomes mediated by trans-translation. Binds to transfer-messenger RNA (tmRNA), required for stable association of tmRNA with ribosomes. tmRNA and SmpB together mimic tRNA shape, replacing the anticodon stem-loop with SmpB. tmRNA is encoded by the ssrA gene; the 2 termini fold to resemble tRNA(Ala) and it encodes a 'tag peptide', a short internal open reading frame. During trans-translation Ala-aminoacylated tmRNA acts like a tRNA, entering the A-site of stalled ribosomes, displacing the stalled mRNA. The ribosome then switches to translate the ORF on the tmRNA; the nascent peptide is terminated with the 'tag peptide' encoded by the tmRNA and targeted for degradation. The ribosome is freed to recommence translation, which seems to be the essential function of trans-translation. The sequence is that of SsrA-binding protein from Lysinibacillus sphaericus (strain C3-41).